A 39-amino-acid chain; its full sequence is Large ribosomal subunit protein bL36 (39 aa).

It belongs to the bacterial ribosomal protein bL36 family.

In Levilactobacillus brevis (strain ATCC 367 / BCRC 12310 / CIP 105137 / JCM 1170 / LMG 11437 / NCIMB 947 / NCTC 947) (Lactobacillus brevis), this protein is Large ribosomal subunit protein bL36.